Reading from the N-terminus, the 161-residue chain is 2-C-methyl-D-erythritol 2,4-cyclodiphosphate synthase (161 aa).

A divalent metal cation contacts are provided by D10 and H12. Residues 10–12 (DVH) and 36–37 (HS) contribute to the 4-CDP-2-C-methyl-D-erythritol 2-phosphate site. H44 provides a ligand contact to a divalent metal cation. Residues 58-60 (DIG), 134-137 (TTTE), F141, and R144 contribute to the 4-CDP-2-C-methyl-D-erythritol 2-phosphate site.

This sequence belongs to the IspF family. In terms of assembly, homotrimer. It depends on a divalent metal cation as a cofactor.

It catalyses the reaction 4-CDP-2-C-methyl-D-erythritol 2-phosphate = 2-C-methyl-D-erythritol 2,4-cyclic diphosphate + CMP. It functions in the pathway isoprenoid biosynthesis; isopentenyl diphosphate biosynthesis via DXP pathway; isopentenyl diphosphate from 1-deoxy-D-xylulose 5-phosphate: step 4/6. Functionally, involved in the biosynthesis of isopentenyl diphosphate (IPP) and dimethylallyl diphosphate (DMAPP), two major building blocks of isoprenoid compounds. Catalyzes the conversion of 4-diphosphocytidyl-2-C-methyl-D-erythritol 2-phosphate (CDP-ME2P) to 2-C-methyl-D-erythritol 2,4-cyclodiphosphate (ME-CPP) with a corresponding release of cytidine 5-monophosphate (CMP). In Parabacteroides distasonis (strain ATCC 8503 / DSM 20701 / CIP 104284 / JCM 5825 / NCTC 11152), this protein is 2-C-methyl-D-erythritol 2,4-cyclodiphosphate synthase.